Reading from the N-terminus, the 398-residue chain is Tryptophan synthase beta chain (398 aa).

Position 88 is an N6-(pyridoxal phosphate)lysine (Lys88).

It belongs to the TrpB family. In terms of assembly, tetramer of two alpha and two beta chains. The cofactor is pyridoxal 5'-phosphate.

It catalyses the reaction (1S,2R)-1-C-(indol-3-yl)glycerol 3-phosphate + L-serine = D-glyceraldehyde 3-phosphate + L-tryptophan + H2O. It participates in amino-acid biosynthesis; L-tryptophan biosynthesis; L-tryptophan from chorismate: step 5/5. Its function is as follows. The beta subunit is responsible for the synthesis of L-tryptophan from indole and L-serine. The protein is Tryptophan synthase beta chain of Histophilus somni (strain 2336) (Haemophilus somnus).